Consider the following 182-residue polypeptide: Large ribosomal subunit protein uL6 (182 aa).

It belongs to the universal ribosomal protein uL6 family. As to quaternary structure, part of the 50S ribosomal subunit.

Its function is as follows. This protein binds to the 23S rRNA, and is important in its secondary structure. It is located near the subunit interface in the base of the L7/L12 stalk, and near the tRNA binding site of the peptidyltransferase center. The sequence is that of Large ribosomal subunit protein uL6 from Caldicellulosiruptor saccharolyticus (strain ATCC 43494 / DSM 8903 / Tp8T 6331).